The sequence spans 298 residues: Tyrosine recombinase XerC (298 aa).

One can recognise a Core-binding (CB) domain in the interval 1-84 (MNHIQEAFLN…TLRTFYEYWM (84 aa)). Residues 105 to 286 (YLPQFFYEEE…SNQQLRKVYL (182 aa)) form the Tyr recombinase domain. Residues Arg145, Lys169, His238, Arg241, and His264 contribute to the active site. The active-site O-(3'-phospho-DNA)-tyrosine intermediate is Tyr273.

It belongs to the 'phage' integrase family. XerC subfamily. Forms a cyclic heterotetrameric complex composed of two molecules of XerC and two molecules of XerD.

Its subcellular location is the cytoplasm. Functionally, site-specific tyrosine recombinase, which acts by catalyzing the cutting and rejoining of the recombining DNA molecules. The XerC-XerD complex is essential to convert dimers of the bacterial chromosome into monomers to permit their segregation at cell division. It also contributes to the segregational stability of plasmids. The sequence is that of Tyrosine recombinase XerC from Staphylococcus aureus (strain MRSA252).